We begin with the raw amino-acid sequence, 166 residues long: Large ribosomal subunit protein uL10 (166 aa).

The protein belongs to the universal ribosomal protein uL10 family. As to quaternary structure, part of the ribosomal stalk of the 50S ribosomal subunit. The N-terminus interacts with L11 and the large rRNA to form the base of the stalk. The C-terminus forms an elongated spine to which L12 dimers bind in a sequential fashion forming a multimeric L10(L12)X complex.

Its function is as follows. Forms part of the ribosomal stalk, playing a central role in the interaction of the ribosome with GTP-bound translation factors. The sequence is that of Large ribosomal subunit protein uL10 from Streptococcus pyogenes serotype M28 (strain MGAS6180).